Here is a 2424-residue protein sequence, read N- to C-terminus: Voltage-dependent P/Q-type calcium channel subunit alpha-1A (2424 aa).

Topologically, residues 1–98 (MARFGDEMPA…KYAKKITEWP (98 aa)) are cytoplasmic. An I repeat occupies 85-363 (NVVRKYAKKI…LVLGVLSGEF (279 aa)). Residues 99-117 (PFEYMILATIIANCIVLAL) traverse the membrane as a helical segment. The Extracellular segment spans residues 118-135 (EQHLPDDDKTPMSERLDD). The chain crosses the membrane as a helical span at residues 136-155 (TEPYFIGIFCFEAGIKIIAL). At 156–167 (GFAFHKGSYLRN) the chain is on the cytoplasmic side. The chain crosses the membrane as a helical span at residues 168–185 (GWNVMDFVVVLTGILATV). The Extracellular segment spans residues 186 to 190 (GTEFD). Residues 191 to 209 (LRTLRAVRVLRPLKLVSGI) form a helical membrane-spanning segment. At 210–228 (PSLQVVLKSIMKAMIPLLQ) the chain is on the cytoplasmic side. The chain crosses the membrane as a helical span at residues 229 to 248 (IGLLLFFAILIFAIIGLEFY). The Extracellular segment spans residues 249–335 (MGKFHTTCFE…NSNDASGNTW (87 aa)). Asn283 is a glycosylation site (N-linked (GlcNAc...) asparagine). Glu318 contacts Ca(2+). Residues 336–360 (NWLYFIPLIIIGSFFMLNLVLGVLS) form a helical membrane-spanning segment. The Cytoplasmic segment spans residues 361–487 (GEFAKERERV…FYIRRMVKTQ (127 aa)). A binding to the beta subunit region spans residues 383–400 (QQIERELNGYMEWISKAE). Thr409 is modified (phosphothreonine). Phosphoserine is present on residues Ser448 and Ser451. The II repeat unit spans residues 473-717 (ERRMRFYIRR…VFLAIAVDNL (245 aa)). The helical transmembrane segment at 488–506 (AFYWTVLSLVALNTLCVAI) threads the bilayer. Residues 507–521 (VHYNQPEWLSDFLYY) are Extracellular-facing. The chain crosses the membrane as a helical span at residues 522-541 (AEFIFLGLFMSEMFIKMYGL). Residues 542-549 (GTRPYFHS) lie on the Cytoplasmic side of the membrane. A helical membrane pass occupies residues 550-568 (SFNCFDCGVIIGSIFEVIW). Residues 569–578 (AVIKPGTSFG) are Extracellular-facing. Residues 579–597 (ISVLRALRLLRIFKVTKYW) form a helical membrane-spanning segment. Topologically, residues 598-616 (ASLRNLVVSLLNSMKSIIS) are cytoplasmic. A helical transmembrane segment spans residues 617–636 (LLFLLFLFIVVFALLGMQLF). At 637–689 (GGQFNFDEGTPPTNFDTFPAAIMTVFQILTGEDWNEVMYDGIKSQGGVQGGMV) the chain is on the extracellular side. Position 668 (Glu668) interacts with Ca(2+). A helical membrane pass occupies residues 690–714 (FSIYFIVLTLFGNYTLLNVFLAIAV). Topologically, residues 715–1253 (DNLANAQELT…RLCHYILNLR (539 aa)) are cytoplasmic. 3 positions are modified to phosphoserine: Ser750, Ser753, and Ser790. A disordered region spans residues 819–1229 (HLDRPLVVDP…GEDGPKPMPP (411 aa)). Basic and acidic residues-rich tracts occupy residues 893 to 912 (ELSR…REGG), 922 to 931 (EAERGKAGDP), and 969 to 996 (RPGE…RSGE). A compositionally biased stretch (polar residues) spans 1053 to 1065 (PNLSTTRPIQQDL). A phosphoserine mark is found at Ser1091 and Ser1104. A compositionally biased stretch (low complexity) spans 1110-1140 (SSTDPAGPTPATAANPQNSTASRRTPNNPGN). Polar residues predominate over residues 1151–1168 (ENSLIVTNPSTAQTNSAK). Over residues 1204–1214 (LPKKEDEKKEE) the composition is skewed to basic and acidic residues. One copy of the III repeat lies at 1240 to 1523 (NPLRRLCHYI…IFVALIIITF (284 aa)). The chain crosses the membrane as a helical span at residues 1254 to 1272 (YFEMCILMVIAMSSIALAA). The Extracellular segment spans residues 1273–1288 (EDPVQPNAPRNNVLRY). Residues 1289 to 1308 (FDYVFTGVFTFEMVIKMIDL) form a helical membrane-spanning segment. Residues 1309–1320 (GLVLHQGAYFRD) are Cytoplasmic-facing. A helical transmembrane segment spans residues 1321-1339 (LWNILDFIVVSGALVAFAF). Residues 1340–1350 (TGNSKGKDINT) are Extracellular-facing. The helical transmembrane segment at 1351 to 1369 (IKSLRVLRVLRPLKTIKRL) threads the bilayer. The Cytoplasmic segment spans residues 1370–1388 (PKLKAVFDCVVNSLKNVFN). Residues 1389 to 1408 (ILIVYMLFMFIFAVVAVQLF) traverse the membrane as a helical segment. Over 1409–1495 (KGKFFHCTDE…QGPSPGYRME (87 aa)) the chain is Extracellular. Residue Glu1469 participates in Ca(2+) binding. A helical membrane pass occupies residues 1496–1520 (MSIFYVVYFVVFPFFFVNIFVALII). Topologically, residues 1521-1575 (ITFQEQGDKMMEEYSLEKNERACIDFAISAKPLTRHMPQNKQSFQYRMWQFVVSP) are cytoplasmic. The stretch at 1560 to 1823 (NKQSFQYRMW…LFVAVIMDNF (264 aa)) is one IV repeat. Residues 1576 to 1604 (PFEYTIMAMIALNTIVLMMKFYGASVAYD) form a helical membrane-spanning segment. The Extracellular segment spans residues 1605–1609 (NALKV). The helical transmembrane segment at 1610–1629 (FNIVFTSLFSLECLLKVLAF) threads the bilayer. Topologically, residues 1630–1637 (GILNYFRD) are cytoplasmic. The chain crosses the membrane as a helical span at residues 1638–1656 (AWNIFDFVTVLGSITDILV). The Extracellular portion of the chain corresponds to 1657 to 1665 (TEFGNNFIN). N-linked (GlcNAc...) asparagine glycosylation is present at Asn1665. Residues 1666 to 1684 (LSFLRLFRAARLIKLLRQG) traverse the membrane as a helical segment. The Cytoplasmic portion of the chain corresponds to 1685–1703 (YTIRILLWTFVQSFKALPY). The helical transmembrane segment at 1704–1723 (VCLLIAMLFFIYAIIGMQVF) threads the bilayer. At 1724–1795 (GNIGIDMEDE…ILTPECGNEF (72 aa)) the chain is on the extracellular side. The helical transmembrane segment at 1796–1820 (AYFYFVSFIFLCSFLMLNLFVAVIM) threads the bilayer. At 1821–2424 (DNFEYLTRDS…GGPRASAPSP (604 aa)) the chain is on the cytoplasmic side. Thr1993 carries the post-translational modification Phosphothreonine. The segment at 1997-2424 (FQRMEPPPDE…GGPRASAPSP (428 aa)) is disordered. Polar residues predominate over residues 2037 to 2053 (SWVTQRAQEMFQKTGTW). Residues Ser2054, Ser2072, Ser2084, Ser2086, Ser2127, and Ser2148 each carry the phosphoserine modification. The segment covering 2074–2090 (EMREMSQDGYSDSEHCL) has biased composition (basic and acidic residues). 2 stretches are compositionally biased toward basic and acidic residues: residues 2142-2159 (RRLD…ENQR) and 2200-2210 (PSREREQERGR). Positions 2211-2229 (PKDRKHRPHHHHHHHHHPG) are enriched in basic residues. Low complexity predominate over residues 2249–2262 (VARVRPARAPALAH). Residues 2280–2305 (RRARRPRPRQRRRPRRRRGGGGRALR) show a composition bias toward basic residues.

The protein belongs to the calcium channel alpha-1 subunit (TC 1.A.1.11) family. CACNA1A subfamily. In terms of assembly, voltage-dependent calcium channels are multisubunit complexes, consisting of alpha-1, alpha-2, beta and delta subunits in a 1:1:1:1 ratio. The channel activity is directed by the pore-forming and voltage-sensitive alpha-1 subunit. In many cases, this subunit is sufficient to generate voltage-sensitive calcium channel activity. The auxiliary subunits beta and alpha-2/delta linked by a disulfide bridge regulate the channel activity. Interacts with CABP1. Interacts with the spider omega-agatoxin-IVA (AC P30288). Interacts with TSPOAP1. As to expression, brain specific. Purkinje cells contain predominantly P-type VSCC, the Q-type being a prominent calcium current in cerebellar granule cells.

It is found in the cell membrane. The catalysed reaction is Ca(2+)(in) = Ca(2+)(out). Functionally, voltage-sensitive calcium channels (VSCC) mediate the entry of calcium ions into excitable cells and are also involved in a variety of calcium-dependent processes, including muscle contraction, hormone or neurotransmitter release, gene expression, cell motility, cell division and cell death. The isoform alpha-1A gives rise to P and/or Q-type calcium currents. P/Q-type calcium channels belong to the 'high-voltage activated' (HVA) group and are specifically blocked by the spider omega-agatoxin-IVA (AC P54282). They are however insensitive to dihydropyridines (DHP). The sequence is that of Voltage-dependent P/Q-type calcium channel subunit alpha-1A (CACNA1A) from Oryctolagus cuniculus (Rabbit).